Reading from the N-terminus, the 306-residue chain is Pantothenate kinase (306 aa).

91–98 (GSVAVGKS) lines the ATP pocket.

This sequence belongs to the prokaryotic pantothenate kinase family.

The protein resides in the cytoplasm. It carries out the reaction (R)-pantothenate + ATP = (R)-4'-phosphopantothenate + ADP + H(+). It functions in the pathway cofactor biosynthesis; coenzyme A biosynthesis; CoA from (R)-pantothenate: step 1/5. The sequence is that of Pantothenate kinase from Streptococcus thermophilus (strain ATCC BAA-491 / LMD-9).